Reading from the N-terminus, the 362-residue chain is MLKEAYISRLDKLQEKYRKLQEELSKPEVIQDVEKYKKLSKELKELQEINELYERYKKAQKELKEAKELLKSSDKDLRELAEEEVNRLTEEMKKLEEELKVHLVPKDPNDTKNVILEIRAGAGGEEAALFAADLFRMYQKYAEEKGWKVSILSSNKTGLGGYKEVIALIEGEGAYSRLKYESGVHRVQRVPVTESSGRIHTSTATVAVLPEVDETDIKIKPEELKIETFRASGAGGQYVNTTETAVRITHIPTGIVVQCQDERSQFQNKQKALKILYAKLKDYYERKKQEEIAKERKEQVGTGERSEKIRTYNFPQNRVTDHRINLTLYKLQDVLEGKLDEIIDALRAKEIEKKLELVEKEG.

Q237 is modified (N5-methylglutamine).

Belongs to the prokaryotic/mitochondrial release factor family. Methylated by PrmC. Methylation increases the termination efficiency of RF1.

The protein localises to the cytoplasm. In terms of biological role, peptide chain release factor 1 directs the termination of translation in response to the peptide chain termination codons UAG and UAA. The polypeptide is Peptide chain release factor 1 (prfA) (Aquifex aeolicus (strain VF5)).